Consider the following 296-residue polypeptide: MTSKKLIVVFGATGAQGGSVARALLEDGAFAVRAVTRSPGRKEAAELRRRGAELMRADQDDERSLEEALTGAHGAFVVTNFWEHCSKEKEVAQGRRLADLSKRLGLQHVVYSGLENVKQLTKGRLEVLHFDGKGEVEEYFRAVNVPTTTIRLPFYYENFLSSFKPQKAPQGDKLLLGLPMGDTPMDGMAVEDLGPIVLSLLKSPEQYIGQVIGLSAGKLTVAEYAAAFSQQTGKTVEDSKITPEEYEKLGFPGAKELADMFRFYALKPDRNVELTMKLNPKARTFQQWLADNKAAF.

NADP(+) contacts are provided by residues 11–16 (GATGAQ), 37–41 (RSPGR), 58–59 (DQ), 79–81 (TNF), Lys-133, and 155–158 (YYEN).

Belongs to the NmrA-type oxidoreductase family. In terms of assembly, homodimer.

It is found in the cytoplasm. It localises to the perinuclear region. The protein localises to the nucleus. Its function is as follows. Redox sensor protein. Undergoes restructuring and subcellular redistribution in response to changes in intracellular NADPH/NADP(+) levels. The polypeptide is NmrA-like family domain-containing protein 1 (NMRAL1) (Gallus gallus (Chicken)).